The sequence spans 80 residues: Exodeoxyribonuclease 7 small subunit (80 aa).

It belongs to the XseB family. As to quaternary structure, heterooligomer composed of large and small subunits.

It is found in the cytoplasm. The enzyme catalyses Exonucleolytic cleavage in either 5'- to 3'- or 3'- to 5'-direction to yield nucleoside 5'-phosphates.. Functionally, bidirectionally degrades single-stranded DNA into large acid-insoluble oligonucleotides, which are then degraded further into small acid-soluble oligonucleotides. In Pseudomonas entomophila (strain L48), this protein is Exodeoxyribonuclease 7 small subunit.